The primary structure comprises 441 residues: Glutamate--tRNA ligase 1 (441 aa).

Residues 8-18 (PSPTGHIHVGN) carry the 'HIGH' region motif. A 'KMSKS' region motif is present at residues 239 to 243 (ELSKR). Position 242 (K242) interacts with ATP.

This sequence belongs to the class-I aminoacyl-tRNA synthetase family. Glutamate--tRNA ligase type 1 subfamily. In terms of assembly, monomer.

Its subcellular location is the cytoplasm. The enzyme catalyses tRNA(Glu) + L-glutamate + ATP = L-glutamyl-tRNA(Glu) + AMP + diphosphate. In terms of biological role, catalyzes the attachment of glutamate to tRNA(Glu) in a two-step reaction: glutamate is first activated by ATP to form Glu-AMP and then transferred to the acceptor end of tRNA(Glu). This Paracoccus denitrificans (strain Pd 1222) protein is Glutamate--tRNA ligase 1.